The sequence spans 338 residues: UDP-3-O-acylglucosamine N-acyltransferase (338 aa).

His239 acts as the Proton acceptor in catalysis.

Belongs to the transferase hexapeptide repeat family. LpxD subfamily. In terms of assembly, homotrimer.

The enzyme catalyses a UDP-3-O-[(3R)-3-hydroxyacyl]-alpha-D-glucosamine + a (3R)-hydroxyacyl-[ACP] = a UDP-2-N,3-O-bis[(3R)-3-hydroxyacyl]-alpha-D-glucosamine + holo-[ACP] + H(+). It participates in bacterial outer membrane biogenesis; LPS lipid A biosynthesis. In terms of biological role, catalyzes the N-acylation of UDP-3-O-acylglucosamine using 3-hydroxyacyl-ACP as the acyl donor. Is involved in the biosynthesis of lipid A, a phosphorylated glycolipid that anchors the lipopolysaccharide to the outer membrane of the cell. The sequence is that of UDP-3-O-acylglucosamine N-acyltransferase from Xylella fastidiosa (strain 9a5c).